A 188-amino-acid chain; its full sequence is E3 ubiquitin-protein ligase RNF183 (188 aa).

The Cytoplasmic segment spans residues 1-157 (MAEQQGREPE…RECFRNPHFR (157 aa)). An RING-type zinc finger spans residues 11–58 (CPVCWNPFNNTFHTPKVLDCCHSFCVECLAHISLVTPTRRRLLCPLCR). A helical; Anchor for type IV membrane protein membrane pass occupies residues 158–178 (IFAYMMAVILCGTVLFIFSIF). Topologically, residues 179–188 (CTRRFFWGVG) are lumenal.

Interacts with FATE1. Interacts with SEC16A. Interacts with BCL2L1. Post-translationally, autoubiquitinated (in vitro).

The protein localises to the endoplasmic reticulum membrane. The protein resides in the endoplasmic reticulum. It is found in the golgi apparatus. It localises to the cis-Golgi network membrane. Its subcellular location is the lysosome. The enzyme catalyses S-ubiquitinyl-[E2 ubiquitin-conjugating enzyme]-L-cysteine + [acceptor protein]-L-lysine = [E2 ubiquitin-conjugating enzyme]-L-cysteine + N(6)-ubiquitinyl-[acceptor protein]-L-lysine.. Its pathway is protein modification; protein ubiquitination. Acts as an E3 ubiquitin ligase catalyzing the covalent attachment of ubiquitin moieties onto substrate proteins. Triggers apoptosis in response to prolonged ER stress by mediating the polyubiquitination and subsequent proteasomal degradation of BCL2L1. May collaborate with FATE1 to restrain BIK protein levels thus regulating apoptotic signaling. The chain is E3 ubiquitin-protein ligase RNF183 (RNF183) from Bos taurus (Bovine).